The primary structure comprises 304 residues: Germ cell-specific gene 1-like protein (304 aa).

Over 1–8 (MKTTRKCR) the chain is Cytoplasmic. Residues 9–29 (ALLSVGLNLLALLFSTTAFIT) form a helical membrane-spanning segment. Residues 30 to 112 (TYWCEGTQRV…FIDLAPASER (83 aa)) lie on the Extracellular side of the membrane. The chain crosses the membrane as a helical span at residues 113–133 (GVLWLSVVSEVLYIMLLVVGF). Residues 134–153 (SLMCLELFHSSNVIDGLKLN) lie on the Cytoplasmic side of the membrane. The helical transmembrane segment at 154 to 174 (AFAAVFTVLSGLLGMVAHMMY) threads the bilayer. At 175–197 (TQVFQITVSLGPEDWRPHTWDYG) the chain is on the extracellular side. A helical transmembrane segment spans residues 198–218 (WSFCMAWGSFTCCMAASVTTL). Topologically, residues 219-304 (NSYTKTVIEF…NTESLGEEQC (86 aa)) are cytoplasmic. Polar residues predominate over residues 266–278 (VDVYPSHGSSHGN). The tract at residues 266-304 (VDVYPSHGSSHGNSRGKMRSPPAPVDQGDNTESLGEEQC) is disordered.

Belongs to the GSG1 family. In terms of assembly, component of the AMPAR complex.

The protein localises to the cell membrane. It is found in the synapse. Its function is as follows. As a component of the AMPAR complex, modifies AMPA receptor (AMPAR) gating. This Danio rerio (Zebrafish) protein is Germ cell-specific gene 1-like protein (gsg1l).